The following is a 128-amino-acid chain: Anion exchange transporter (128 aa).

Over 1–14 the chain is Extracellular; it reads LFSFKELNEQFKRK. Residues 15-35 traverse the membrane as a helical segment; it reads IKVVLPVDLVLIIAASFACYC. The Cytoplasmic portion of the chain corresponds to 36–66; that stretch reads TNMENTYGLEVVGHIPRGIPPPRAPPMNILS. A helical transmembrane segment spans residues 67-87; the sequence is AVITEAFGVALVGYAASLALA. The Extracellular segment spans residues 88–103; sequence QGSAKKFKYSVDDNQE. Residues 104–124 traverse the membrane as a helical segment; sequence FLAHGLSNVISSFLFCIPSAA. Topologically, residues 125–128 are cytoplasmic; it reads AMGR.

It belongs to the SLC26A/SulP transporter (TC 2.A.53) family. Expressed in gastric epithelium, predominantly in the gastric parietal cells but also at lower levels in mucosal cells.

It is found in the basolateral cell membrane. The protein localises to the recycling endosome membrane. It localises to the apical cell membrane. Its subcellular location is the lateral cell membrane. The catalysed reaction is chloride(in) = chloride(out). It carries out the reaction iodide(out) = iodide(in). It catalyses the reaction bromide(in) = bromide(out). The enzyme catalyses oxalate(in) = oxalate(out). The catalysed reaction is nitrate(in) = nitrate(out). It carries out the reaction sulfate(in) = sulfate(out). It catalyses the reaction D-gluconate(in) = D-gluconate(out). The enzyme catalyses thiocyanate(in) = thiocyanate(out). The catalysed reaction is hydrogencarbonate(in) = hydrogencarbonate(out). It carries out the reaction hydrogencarbonate(in) + chloride(out) = hydrogencarbonate(out) + chloride(in). Its function is as follows. Acts as an anion channel mediating the transport of chloride, bromide, iodide, nitrate, sulfate, gluconate, thiocyanate, oxalate and bicarbonate ions. Its permeability towards bicarbonate is weak and increases when pH is above 7. Mediates thiocyanate transport in retinal pigment epithelium cells. Mediates iodide transport in the thyroid gland, playing an important role in the synthesis of thyroid hormones and the maintenance of thyroid function. This chain is Anion exchange transporter, found in Oryctolagus cuniculus (Rabbit).